Consider the following 862-residue polypeptide: MIKKQERMYTSGEIHSILHPWVSEWFRRTFDDFTEAQRYAIMDIHRGRNVLVSSPTGSGKTLTAFLSIISELTRLADDGELEDSVYCIYISPLKALDNDIERNLEEPLSAIRDIAAGEGRDLEIRKAVRTGDTTSYERSRMLKKPPHILITTPETLSILLVAPKFREKLSTVRYVIVDEIHSLADNKRGVHLSLSLERLQHLVGDFTRIGLSATVHPLERVARFLVGYSYGSERECLIVDVSYLKELDIDLICPVDDIVAADPEEIGNALYDILHDLIEDHRTTLIFTNTRSGTESVVYNLKSRFPESYSDSNIMAHHSSLSREIRLETEEKLKRGELKAVVSSTSLELGIDIGYIDLVVLLSSPKSVSRALQRIGRSGHQLHQRSKGRIVVVDRDDLVECSLILKNALEGKIDSIKVPENCLDVLAQHIYGMAIENPWDIDHALAVIRNSYCYRNLSREDYLSVLSYLAGEYVELEERYVYAKIWVDYDKNQFGKRGKLARMLYSTNIGTIPDRSAAVVKCGGKVVGRIEEDFMEKLRKGDTFVLGGRIYRFNYARGMTVNVTPASGPPTIPSWFSEQLPLSFDLALDIQRFRDIMDGKFQYGRSRDEIMEFIMSYLHVDERAASSIYEYFREQYLYAGIPSIRRMLVEYYTGFGGRKFIVFHSLFGRRVNDAISRAVAYVIARRYRRDVMISVSDNGFYLSSEGKMGGLEAFRELEPENLRNVLKKALDRTETLASRFRHCAGRALMILRRYRGEEKSVGRQQVRGKILLKFVSELDDKFPILEEARREVMEDYMDIENAIRVLEWIRDGDMEIKQINTRIPSPFAFNLVAQGYLDVLKYEDRIEFIRRMHQAIIDEIKR.

ATP is bound by residues Gln37, Lys60, Thr61, Asp178, Glu179, Val360, Arg377, and His380. Residues Ile41–Glu233 enclose the Helicase ATP-binding domain. The short motif at Asp178–His181 is the DEAH box element. Residues Ala269 to Asp424 enclose the Helicase C-terminal domain. The WH domain stretch occupies residues Val425–Pro513. The tract at residues Asp514–Arg862 is domain 4.

The protein belongs to the Lhr helicase family. Lhr-Core subfamily. As to quaternary structure, monomer.

The catalysed reaction is Couples ATP hydrolysis with the unwinding of duplex DNA by translocating in the 3'-5' direction.. It catalyses the reaction ATP + H2O = ADP + phosphate + H(+). DNA helicase that translocates in a 3'-5' direction on single-stranded (ss)DNA, probably involved in DNA repair. Most active on three- or four-stranded forked DNA; flayed structures and Holliday junction (HJ) substrates are unwound slightly less well. Also unwinds 3'-tailed duplexes; both RNA:DNA hybrids and double-stranded (ds)DNA with a 3'-single strand (ss)DNA loading strand are unwound. Substrates where the helicase loads on a 3'-ssRNA tail (DNA:RNA and RNA:RNA) were not tested. Blunt-ended dsDNA is not a substrate. Probably involved in replication-coupled DNA repair; remodeling of fork DNA after binding by Lhr generates ssDNA for ATP-dependent DNA translocation. This Methanothermobacter thermautotrophicus (strain ATCC 29096 / DSM 1053 / JCM 10044 / NBRC 100330 / Delta H) (Methanobacterium thermoautotrophicum) protein is ATP-dependent helicase Lhr-Core.